The sequence spans 462 residues: Argininosuccinate lyase (462 aa).

Belongs to the lyase 1 family. Argininosuccinate lyase subfamily.

It localises to the cytoplasm. The enzyme catalyses 2-(N(omega)-L-arginino)succinate = fumarate + L-arginine. It functions in the pathway amino-acid biosynthesis; L-arginine biosynthesis; L-arginine from L-ornithine and carbamoyl phosphate: step 3/3. The chain is Argininosuccinate lyase from Prochlorococcus marinus (strain SARG / CCMP1375 / SS120).